A 98-amino-acid chain; its full sequence is MKLTSHDIIRKPVITEKSMAAMAEKKYTFMVHVNANKSQVKRAVEEVFDVKVKDVNTINGLGKTKRMGVHVGKRSDYKKAIVTLTEESKAIEFFDGLQ.

This sequence belongs to the universal ribosomal protein uL23 family. As to quaternary structure, part of the 50S ribosomal subunit. Contacts protein L29, and trigger factor when it is bound to the ribosome.

Functionally, one of the early assembly proteins it binds 23S rRNA. One of the proteins that surrounds the polypeptide exit tunnel on the outside of the ribosome. Forms the main docking site for trigger factor binding to the ribosome. The chain is Large ribosomal subunit protein uL23 from Clostridium botulinum (strain Eklund 17B / Type B).